Consider the following 842-residue polypeptide: MGMKSGWLLFYLLVSLIKVIGSEQHWVTVYYGVPVWREAETTLFCASDAKAHSTEAHNIWATQACVPTDPNPQEVLLPNVTEKFNMWENKMADQMQEDIISLWEQSLKPCVKLTPLCVTMLCNDSYGEERNNTNMTTREPDIGYKQMKNCSFNATTELTDKKKQVYSLFYVEDVVPINAYNKTYRLINCNTTAVTQACPKTSFEPIPIHYCAPPGFAIMKCNEGNFSGNGSCTNVSTVQCTHGIKPVISTQLILNGSLNTDGIVIRNDSHSNLLVQWNETVPINCTRPGNNTGGQVQIGPAMTFYNIEKIVGDIRQAYCNVSKELWEPMWNRTREEIKKILGKNNITFRARERNEGDLEVTHLMFNCRGEFFYCNTSKLFNEELLNETGEPITLPCRIRQIVNLWTRVGKGIYAPPIRGVLNCTSNITGLVLEYSGGPDTKETIVYPSGGNMVNLWRQELYKYKVVSIEPIGVAPGKAKRRTVSREKRAAFGLGALFLGFLGAAGSTMGAASITLTVQARTLLSGIVQQQNILLRAIEAQQHLLQLSIWGIKQLQAKVLAIERYLRDQQILSLWGCSGKTICYTTVPWNETWSNNTSYDTIWNNLTWQQWDEKVRNYSGVIFGLIEQAQEQQNTNEKSLLELDQWDSLWSWFGITKWLWYIKIAIMIVAGIVGIRIISIVITIIARVRQGYSPLSLQTLIPTARGPDRPEETEGGVGEQDRGRSVRLVSGFSALVWEDLRNLLIFLYHRLTDSLLILRRTLELLGQSLSRGLQLLNELRTHLWGILAYWGKELRDSAISLLNTTAIVVAEGTDRIIELAQRIGRGILHIPRRIRQGLERALI.

Positions 1–23 (MGMKSGWLLFYLLVSLIKVIGSE) are cleaved as a signal peptide. At 24–663 (QHWVTVYYGV…ITKWLWYIKI (640 aa)) the chain is on the extracellular side. A disulfide bridge connects residues C45 and C65. N-linked (GlcNAc...) asparagine; by host glycosylation is found at N79, N123, N131, N134, N149, N153, N181, N190, N225, N229, N234, N255, N267, N278, N284, N290, N320, N331, and N345. Cystine bridges form between C110–C198, C117–C189, C122–C150, C211–C240, and C221–C232. Positions 122 to 149 (CNDSYGEERNNTNMTTREPDIGYKQMKN) are V1. The interval 150–189 (CSFNATTELTDKKKQVYSLFYVEDVVPINAYNKTYRLINC) is V2. The tract at residues 285–318 (CTRPGNNTGGQVQIGPAMTFYNIEKIVGDIRQAY) is V3. A disulfide bridge links C285 with C319. The segment at 353–363 (RNEGDLEVTHL) is CD4-binding loop. 2 disulfides stabilise this stretch: C367-C423 and C374-C396. The V4 stretch occupies residues 374-396 (CNTSKLFNEELLNETGEPITLPC). N375, N386, N422, and N426 each carry an N-linked (GlcNAc...) asparagine; by host glycan. V5 stretches follow at residues 439 to 448 (DTKETIVYPS) and 441 to 448 (KETIVYPS). Residues 489–510 (AAFGLGALFLGFLGAAGSTMGA) are fusion peptide. The tract at residues 552 to 570 (KQLQAKVLAIERYLRDQQI) is immunosuppression. C576 and C582 form a disulfide bridge. N-linked (GlcNAc...) asparagine; by host glycans are attached at residues N589, N594, N595, N604, and N616. Positions 612–646 (EKVRNYSGVIFGLIEQAQEQQNTNEKSLLELDQWD) form a coiled coil. Positions 641–662 (ELDQWDSLWSWFGITKWLWYIK) are MPER; binding to GalCer. A helical transmembrane segment spans residues 664–684 (AIMIVAGIVGIRIISIVITII). Residues 685–842 (ARVRQGYSPL…IRQGLERALI (158 aa)) lie on the Cytoplasmic side of the membrane. Residues 691–694 (YSPL) carry the YXXL motif; contains endocytosis signal motif.

It belongs to the HIV-1 env protein family. In terms of assembly, the mature envelope protein (Env) consists of a homotrimer of non-covalently associated gp120-gp41 heterodimers. The resulting complex protrudes from the virus surface as a spike. There seems to be as few as 10 spikes on the average virion. Interacts with host CD4, CCR5 and CXCR4. Gp120 also interacts with the C-type lectins CD209/DC-SIGN and CLEC4M/DC-SIGNR (collectively referred to as DC-SIGN(R)). Gp120 and gp41 interact with GalCer. Gp120 interacts with host ITGA4/ITGB7 complex; on CD4+ T-cells, this interaction results in rapid activation of integrin ITGAL/LFA-1, which facilitates efficient cell-to-cell spreading of HIV-1. Gp120 interacts with cell-associated heparan sulfate; this interaction increases virus infectivity on permissive cells and may be involved in infection of CD4- cells. As to quaternary structure, the mature envelope protein (Env) consists of a homotrimer of non-covalently associated gp120-gp41 heterodimers. The resulting complex protrudes from the virus surface as a spike. There seems to be as few as 10 spikes on the average virion. Post-translationally, highly glycosylated by host. The high number of glycan on the protein is reffered to as 'glycan shield' because it contributes to hide protein sequence from adaptive immune system. Palmitoylation of the transmembrane protein and of Env polyprotein (prior to its proteolytic cleavage) is essential for their association with host cell membrane lipid rafts. Palmitoylation is therefore required for envelope trafficking to classical lipid rafts, but not for viral replication. In terms of processing, specific enzymatic cleavages in vivo yield mature proteins. Envelope glycoproteins are synthesized as an inactive precursor that is heavily N-glycosylated and processed likely by host cell furin in the Golgi to yield the mature SU and TM proteins. The cleavage site between SU and TM requires the minimal sequence [KR]-X-[KR]-R. About 2 of the 9 disulfide bonds of gp41 are reduced by P4HB/PDI, following binding to CD4 receptor.

It is found in the virion membrane. The protein resides in the host cell membrane. Its subcellular location is the host endosome membrane. Oligomerizes in the host endoplasmic reticulum into predominantly trimers. In a second time, gp160 transits in the host Golgi, where glycosylation is completed. The precursor is then proteolytically cleaved in the trans-Golgi and thereby activated by cellular furin or furin-like proteases to produce gp120 and gp41. In terms of biological role, attaches the virus to the host lymphoid cell by binding to the primary receptor CD4. This interaction induces a structural rearrangement creating a high affinity binding site for a chemokine coreceptor like CXCR4 and/or CCR5. Acts as a ligand for CD209/DC-SIGN and CLEC4M/DC-SIGNR, which are respectively found on dendritic cells (DCs), and on endothelial cells of liver sinusoids and lymph node sinuses. These interactions allow capture of viral particles at mucosal surfaces by these cells and subsequent transmission to permissive cells. HIV subverts the migration properties of dendritic cells to gain access to CD4+ T-cells in lymph nodes. Virus transmission to permissive T-cells occurs either in trans (without DCs infection, through viral capture and transmission), or in cis (following DCs productive infection, through the usual CD4-gp120 interaction), thereby inducing a robust infection. In trans infection, bound virions remain infectious over days and it is proposed that they are not degraded, but protected in non-lysosomal acidic organelles within the DCs close to the cell membrane thus contributing to the viral infectious potential during DCs' migration from the periphery to the lymphoid tissues. On arrival at lymphoid tissues, intact virions recycle back to DCs' cell surface allowing virus transmission to CD4+ T-cells. Its function is as follows. Acts as a class I viral fusion protein. Under the current model, the protein has at least 3 conformational states: pre-fusion native state, pre-hairpin intermediate state, and post-fusion hairpin state. During fusion of viral and target intracellular membranes, the coiled coil regions (heptad repeats) assume a trimer-of-hairpins structure, positioning the fusion peptide in close proximity to the C-terminal region of the ectodomain. The formation of this structure appears to drive apposition and subsequent fusion of viral and target cell membranes. Complete fusion occurs in host cell endosomes and is dynamin-dependent, however some lipid transfer might occur at the plasma membrane. The virus undergoes clathrin-dependent internalization long before endosomal fusion, thus minimizing the surface exposure of conserved viral epitopes during fusion and reducing the efficacy of inhibitors targeting these epitopes. Membranes fusion leads to delivery of the nucleocapsid into the cytoplasm. In Human immunodeficiency virus type 1 group N (isolate YBF30) (HIV-1), this protein is Envelope glycoprotein gp160.